The sequence spans 189 residues: Acireductone dioxygenase 1 (189 aa).

Fe(2+) contacts are provided by His-102, His-104, Glu-108, and His-146. 4 residues coordinate Ni(2+): His-102, His-104, Glu-108, and His-146.

This sequence belongs to the acireductone dioxygenase (ARD) family. As to quaternary structure, monomer. It depends on Fe(2+) as a cofactor. Ni(2+) serves as cofactor.

The catalysed reaction is 1,2-dihydroxy-5-(methylsulfanyl)pent-1-en-3-one + O2 = 3-(methylsulfanyl)propanoate + CO + formate + 2 H(+). The enzyme catalyses 1,2-dihydroxy-5-(methylsulfanyl)pent-1-en-3-one + O2 = 4-methylsulfanyl-2-oxobutanoate + formate + 2 H(+). It functions in the pathway amino-acid biosynthesis; L-methionine biosynthesis via salvage pathway; L-methionine from S-methyl-5-thio-alpha-D-ribose 1-phosphate: step 5/6. Its function is as follows. Catalyzes 2 different reactions between oxygen and the acireductone 1,2-dihydroxy-3-keto-5-methylthiopentene (DHK-MTPene) depending upon the metal bound in the active site. Fe-containing acireductone dioxygenase (Fe-ARD) produces formate and 2-keto-4-methylthiobutyrate (KMTB), the alpha-ketoacid precursor of methionine in the methionine recycle pathway. Ni-containing acireductone dioxygenase (Ni-ARD) produces methylthiopropionate, carbon monoxide and formate, and does not lie on the methionine recycle pathway. This Nocardia farcinica (strain IFM 10152) protein is Acireductone dioxygenase 1.